Reading from the N-terminus, the 142-residue chain is Ribonuclease VapC31 (142 aa).

The region spanning 3 to 139 is the PINc domain; the sequence is LLDANVLLAA…ARFASVRHIR (137 aa). Mg(2+)-binding residues include D5 and D108.

The protein belongs to the PINc/VapC protein family. Mg(2+) is required as a cofactor.

Its function is as follows. Toxic component of a type II toxin-antitoxin (TA) system. An RNase. Its toxic effect is neutralized by coexpression with cognate antitoxin VapB31. This Mycobacterium tuberculosis (strain CDC 1551 / Oshkosh) protein is Ribonuclease VapC31.